A 92-amino-acid chain; its full sequence is Small ribosomal subunit protein uS19c (92 aa).

Belongs to the universal ribosomal protein uS19 family.

It localises to the plastid. The protein localises to the chloroplast. Its function is as follows. Protein S19 forms a complex with S13 that binds strongly to the 16S ribosomal RNA. This chain is Small ribosomal subunit protein uS19c, found in Adiantum capillus-veneris (Maidenhair fern).